The sequence spans 447 residues: Tubulin beta-2 chain (447 aa).

Residues Q11, E69, S138, G142, T143, G144, N204, and N226 each coordinate GTP. E69 lines the Mg(2+) pocket. The disordered stretch occupies residues 426–447; sequence QDAGVDEEEEEYEEEAPLEEEV. The span at 429-447 shows a compositional bias: acidic residues; it reads GVDEEEEEYEEEAPLEEEV.

Belongs to the tubulin family. As to quaternary structure, dimer of alpha and beta chains. A typical microtubule is a hollow water-filled tube with an outer diameter of 25 nm and an inner diameter of 15 nM. Alpha-beta heterodimers associate head-to-tail to form protofilaments running lengthwise along the microtubule wall with the beta-tubulin subunit facing the microtubule plus end conferring a structural polarity. Microtubules usually have 13 protofilaments but different protofilament numbers can be found in some organisms and specialized cells. It depends on Mg(2+) as a cofactor.

Its subcellular location is the cytoplasm. The protein resides in the cytoskeleton. Its function is as follows. Tubulin is the major constituent of microtubules, a cylinder consisting of laterally associated linear protofilaments composed of alpha- and beta-tubulin heterodimers. Microtubules grow by the addition of GTP-tubulin dimers to the microtubule end, where a stabilizing cap forms. Below the cap, tubulin dimers are in GDP-bound state, owing to GTPase activity of alpha-tubulin. This Colletotrichum gloeosporioides (Anthracnose fungus) protein is Tubulin beta-2 chain (TUB2).